Reading from the N-terminus, the 298-residue chain is Bifunctional protein FolD (298 aa).

NADP(+)-binding positions include 167–169 (GRS), serine 192, and isoleucine 233.

The protein belongs to the tetrahydrofolate dehydrogenase/cyclohydrolase family. In terms of assembly, homodimer.

It catalyses the reaction (6R)-5,10-methylene-5,6,7,8-tetrahydrofolate + NADP(+) = (6R)-5,10-methenyltetrahydrofolate + NADPH. The enzyme catalyses (6R)-5,10-methenyltetrahydrofolate + H2O = (6R)-10-formyltetrahydrofolate + H(+). It functions in the pathway one-carbon metabolism; tetrahydrofolate interconversion. Catalyzes the oxidation of 5,10-methylenetetrahydrofolate to 5,10-methenyltetrahydrofolate and then the hydrolysis of 5,10-methenyltetrahydrofolate to 10-formyltetrahydrofolate. The polypeptide is Bifunctional protein FolD (Caulobacter sp. (strain K31)).